We begin with the raw amino-acid sequence, 617 residues long: Proline--tRNA ligase (617 aa).

Belongs to the class-II aminoacyl-tRNA synthetase family. ProS type 1 subfamily. As to quaternary structure, homodimer.

Its subcellular location is the cytoplasm. The enzyme catalyses tRNA(Pro) + L-proline + ATP = L-prolyl-tRNA(Pro) + AMP + diphosphate. Catalyzes the attachment of proline to tRNA(Pro) in a two-step reaction: proline is first activated by ATP to form Pro-AMP and then transferred to the acceptor end of tRNA(Pro). As ProRS can inadvertently accommodate and process non-cognate amino acids such as alanine and cysteine, to avoid such errors it has two additional distinct editing activities against alanine. One activity is designated as 'pretransfer' editing and involves the tRNA(Pro)-independent hydrolysis of activated Ala-AMP. The other activity is designated 'posttransfer' editing and involves deacylation of mischarged Ala-tRNA(Pro). The misacylated Cys-tRNA(Pro) is not edited by ProRS. This is Proline--tRNA ligase from Streptococcus pneumoniae (strain ATCC 700669 / Spain 23F-1).